The chain runs to 380 residues: MTIMRKNHPLLKIINHSFIDLPTPSNISAWWNFGSLLGICLMVQIITGLFLAMHYTSDTTTAFSSVTHICRDVNYGWLIRYAHANGASMFFICLFIHVGRGIYYGSYMLNETWNIGIILLLTTMATAFVGYVLPWGQMSFWGATVITNLLSAIPYIGTTLVEWIWGGFSVDKATLTRFFAFHFILPFIITALVLVHLLFLHETGSNNPSGLNSDSDKIPFHPYYTIKDILGVLLLLMVLMFLVLFFPDVLGDPDNYTPANPLNTPAHIKPEWYFLFAYAILRSIPNKLGGVLALLLSILILAAFPLLNSSKQHGLIYRPITQTLYWIFVANLLILTWIGGQPVEYPFTTIGQISSIMYFMIIVIFMPMASMVENNILKFI.

The next 4 helical transmembrane spans lie at 33 to 53 (FGSL…FLAM), 77 to 98 (WLIR…FIHV), 113 to 133 (WNIG…GYVL), and 178 to 198 (FFAF…VHLL). Residues H83 and H97 each coordinate heme b. 2 residues coordinate heme b: H182 and H196. Residue H201 coordinates a ubiquinone. 4 helical membrane passes run 226 to 246 (IKDI…VLFF), 288 to 308 (LGGV…PLLN), 320 to 340 (ITQT…WIGG), and 347 to 367 (FTTI…IFMP).

This sequence belongs to the cytochrome b family. In terms of assembly, the cytochrome bc1 complex contains 11 subunits: 3 respiratory subunits (MT-CYB, CYC1 and UQCRFS1), 2 core proteins (UQCRC1 and UQCRC2) and 6 low-molecular weight proteins (UQCRH/QCR6, UQCRB/QCR7, UQCRQ/QCR8, UQCR10/QCR9, UQCR11/QCR10 and a cleavage product of UQCRFS1). This cytochrome bc1 complex then forms a dimer. Heme b is required as a cofactor.

It localises to the mitochondrion inner membrane. Component of the ubiquinol-cytochrome c reductase complex (complex III or cytochrome b-c1 complex) that is part of the mitochondrial respiratory chain. The b-c1 complex mediates electron transfer from ubiquinol to cytochrome c. Contributes to the generation of a proton gradient across the mitochondrial membrane that is then used for ATP synthesis. This chain is Cytochrome b (MT-CYB), found in Microryzomys minutus (Forest small rice rat).